Consider the following 85-residue polypeptide: UPF0297 protein CD630_12830 (85 aa).

It belongs to the UPF0297 family.

The chain is UPF0297 protein CD630_12830 from Clostridioides difficile (strain 630) (Peptoclostridium difficile).